The following is a 434-amino-acid chain: MPLKSLKNRLNQHFDLSPRYGSVKKIMPNIVYADGFNPSVGDVVKIEKSDGSECVGMVVVAEKEQFGFTPFNFIEGARAGDKVLFLKEGLNFPVGRNLLGRVLNPLGQVIDNKGALDYERLAPVITTPIAPLKRGLIDEIFSVGVKSIDGLLTCGKGQKLGIFAGSGVGKSTLMGMITRGCLAPIKVIALIGERGREIPEFIEKNLKGDLSSCVLVVATSDDSPLMRKYGAFCAMSVAEYFKNQGLDVLFIMDSVTRFAMAQREIGLALGEPPTSKGYPPSALSLLPQLMERAGKEENKGSITAFFSVLVEGDDLSDPIADQTRSILDGHIVLSRELTDYGIYPPINILNSASRVAKDIISESQNLCARKFRRLYALLKENEMLIRIGSYQMGNDKELDEAIKKKALMEQFLAQDENALQPFETSFQQLEEILR.

Position 164–171 (164–171 (AGSGVGKS)) interacts with ATP.

Belongs to the ATPase alpha/beta chains family.

The protein localises to the cytoplasm. The enzyme catalyses ATP + H2O + 4 H(+)(in) = ADP + phosphate + 5 H(+)(out). In terms of biological role, probable catalytic subunit of a protein translocase for flagellum-specific export, or a proton translocase involved in local circuits at the flagellum. This is Flagellum-specific ATP synthase (fliI) from Helicobacter pylori (strain ATCC 700392 / 26695) (Campylobacter pylori).